A 1651-amino-acid polypeptide reads, in one-letter code: Roundabout homolog 1 (1651 aa).

A signal peptide spans 1 to 25; the sequence is MKWKHVPFLVMISLLSLSPNHLFLA. Over 26–897 the chain is Extracellular; it reads QLIPDPEDVE…QQISDVVKQP (872 aa). Residues 33–57 form a disordered region; sequence DVERGNDHGTPIPTSDNDDNSLGYT. The span at 44–56 shows a compositional bias: polar residues; that stretch reads IPTSDNDDNSLGY. Ig-like C2-type domains follow at residues 68 to 164, 170 to 257, 262 to 346, 351 to 446, and 455 to 541; these read PRIV…ASLE, DDFR…AELT, PSFV…ATLT, PHFV…LEVT, and PVIR…AYIE. Cysteine 89 and cysteine 147 form a disulfide bridge. Asparagine 160 is a glycosylation site (N-linked (GlcNAc...) asparagine). Disulfide bonds link cysteine 191–cysteine 240, cysteine 283–cysteine 330, and cysteine 372–cysteine 428. Residue asparagine 463 is glycosylated (N-linked (GlcNAc...) asparagine). Cysteine 476 and cysteine 525 are disulfide-bonded. 3 Fibronectin type-III domains span residues 563 to 657, 676 to 773, and 778 to 874; these read APSK…TQDV, AVLH…TLEE, and PPQG…LDAH. N-linked (GlcNAc...) asparagine glycosylation is found at asparagine 790, asparagine 820, and asparagine 827. Residues 898–918 form a helical membrane-spanning segment; it reads AFIAGIGAACWIILMVFSIWL. The Cytoplasmic portion of the chain corresponds to 919–1651; sequence YRHRKKRNGL…NNEELEETES (733 aa). Serine 940 carries the phosphoserine modification. Threonine 948 bears the Phosphothreonine mark. Tyrosine 1038 carries the phosphotyrosine; by ABL; in vitro modification. Serine 1055 bears the Phosphoserine mark. Residues tyrosine 1073 and tyrosine 1114 each carry the phosphotyrosine; by ABL; in vitro modification. 4 disordered regions span residues 1124–1202, 1224–1337, 1352–1397, and 1420–1651; these read KDYR…SEEY, YLQQ…ADME, EQTP…DGSF, and RRQM…ETES. The span at 1137-1146 shows a compositional bias: polar residues; that stretch reads PYNQSYDQNT. Residues 1147 to 1163 show a composition bias toward low complexity; it reads GGSYNSSDRGSSTSGSQ. A compositionally biased stretch (pro residues) spans 1186 to 1196; that stretch reads LPPPPAHPPPH. Threonine 1240 carries the phosphothreonine modification. Residues 1255 to 1269 are compositionally biased toward polar residues; that stretch reads YSHQSTATLTPSPQE. Basic and acidic residues predominate over residues 1281–1293; that stretch reads ETGHMQHQPDRRR. A compositionally biased stretch (pro residues) spans 1296-1307; it reads VSPPPPPRPISP. At serine 1297 the chain carries Phosphoserine. Positions 1322 to 1336 are enriched in acidic residues; the sequence is MDTDAPEEEEDEADM. Over residues 1384-1397 the composition is skewed to low complexity; the sequence is SSGRSSVSSSDGSF. The span at 1438–1451 shows a compositional bias: polar residues; it reads PRPTSPVSTDSNMS. A compositionally biased stretch (basic residues) spans 1459 to 1470; that stretch reads RPAKKLKHQPGH. Positions 1480-1490 are enriched in pro residues; sequence LPPPPVPPPAI. Basic and acidic residues-rich tracts occupy residues 1516 to 1541 and 1549 to 1573; these read ARTDRSSDRKGSSYKGREVLDGRQVV and DPREAQEQQNDGKGRGNKAAKRDLP. The segment covering 1592 to 1601 has biased composition (polar residues); sequence FPTSNNPRDP. Over residues 1602–1614 the composition is skewed to low complexity; it reads SSSSSMSSRGSGS. Positions 1642–1651 are enriched in acidic residues; the sequence is NNEELEETES.

Belongs to the immunoglobulin superfamily. ROBO family. Homodimer. Dimerization is mediated by the extracellular domain and is independent of SLIT liganding. Interacts with SLIT1. Interacts with SLIT2. Interacts with FLRT3. Interacts with MYO9B (via Rho-GAP domain). Ubiquitinated. May be deubiquitinated by USP33. In terms of tissue distribution, widely expressed, with exception of kidney.

It is found in the cell membrane. It localises to the cell projection. The protein localises to the axon. The protein resides in the endoplasmic reticulum-Golgi intermediate compartment membrane. Receptor for SLIT1 and SLIT2 that mediates cellular responses to molecular guidance cues in cellular migration, including axonal navigation at the ventral midline of the neural tube and projection of axons to different regions during neuronal development. Interaction with the intracellular domain of FLRT3 mediates axon attraction towards cells expressing NTN1. In axon growth cones, the silencing of the attractive effect of NTN1 by SLIT2 may require the formation of a ROBO1-DCC complex. Plays a role in the regulation of cell migration via its interaction with MYO9B; inhibits MYO9B-mediated stimulation of RHOA GTPase activity, and thereby leads to increased levels of active, GTP-bound RHOA. May be required for lung development. This Homo sapiens (Human) protein is Roundabout homolog 1 (ROBO1).